The primary structure comprises 473 residues: Cysteine--tRNA ligase (473 aa).

C28 is a binding site for Zn(2+). A 'HIGH' region motif is present at residues P30–N40. Zn(2+)-binding residues include C213, H238, and E242. A 'KMSKS' region motif is present at residues K270–S274. An ATP-binding site is contributed by K273.

This sequence belongs to the class-I aminoacyl-tRNA synthetase family. Requires Zn(2+) as cofactor.

Its subcellular location is the cytoplasm. It carries out the reaction tRNA(Cys) + L-cysteine + ATP = L-cysteinyl-tRNA(Cys) + AMP + diphosphate. The sequence is that of Cysteine--tRNA ligase from Methanosarcina acetivorans (strain ATCC 35395 / DSM 2834 / JCM 12185 / C2A).